We begin with the raw amino-acid sequence, 1198 residues long: Rac guanine nucleotide exchange factor B (1198 aa).

Residues 1 to 104 (MFSNFFGSSK…QHQGVITSLQ (104 aa)) form a disordered region. Residues 8–20 (SSKRNTIASSSSS) show a composition bias toward low complexity. Over residues 21–34 (SKKDKDNGKDESSK) the composition is skewed to basic and acidic residues. A compositionally biased stretch (polar residues) spans 35–58 (LKNSGSSTLPKPITNNESGNNFIT). The segment covering 59-97 (SPSVSSPLISPLSSSPSPLLSSSSNSIQSTSHQQQQQHQ) has biased composition (low complexity). Positions 126 to 232 (SSLEQTARKW…NIVVLGKHAS (107 aa)) constitute a Calponin-homology (CH) 1 domain. Residues 260–284 (FGGNHNNNNNNNNNNNTSNGDLSPV) are disordered. The segment covering 263–275 (NHNNNNNNNNNNN) has biased composition (low complexity). Calponin-homology (CH) domains follow at residues 341-449 (PELQ…NKMY) and 511-619 (PEDM…ENFD). One can recognise a DH domain in the interval 632–846 (RRQKVIEEII…KRVADHVNES (215 aa)). Positions 876-1026 (TYIREGFLEI…WMEDLRSCLQ (151 aa)) constitute a PH domain. Residues 940–952 (GEACVDGDDDGGE) are compositionally biased toward acidic residues. 2 disordered regions span residues 940–989 (GEAC…SNKS) and 1076–1198 (NNNN…IDNQ). 2 stretches are compositionally biased toward low complexity: residues 977 to 989 (NSNNNNNSNSNKS) and 1076 to 1118 (NNNN…NNND). Acidic residues predominate over residues 1155–1167 (DETISDTESDDYE). Residues 1188 to 1198 (FSDTIKNIDNQ) show a composition bias toward polar residues.

Binds to F-actin.

The protein localises to the late endosome. In terms of biological role, involved in the regulation of the late steps of the endocytic pathway. The protein is Rac guanine nucleotide exchange factor B (gxcB) of Dictyostelium discoideum (Social amoeba).